Here is a 376-residue protein sequence, read N- to C-terminus: 23S rRNA (uracil(747)-C(5))-methyltransferase RlmC (376 aa).

[4Fe-4S] cluster is bound by residues Cys-3, Cys-11, Cys-14, and Cys-87. Residues Gln-212, Phe-241, Glu-262, and Asn-307 each coordinate S-adenosyl-L-methionine. Cys-334 functions as the Nucleophile in the catalytic mechanism.

It belongs to the class I-like SAM-binding methyltransferase superfamily. RNA M5U methyltransferase family. RlmC subfamily.

The enzyme catalyses uridine(747) in 23S rRNA + S-adenosyl-L-methionine = 5-methyluridine(747) in 23S rRNA + S-adenosyl-L-homocysteine + H(+). Functionally, catalyzes the formation of 5-methyl-uridine at position 747 (m5U747) in 23S rRNA. The sequence is that of 23S rRNA (uracil(747)-C(5))-methyltransferase RlmC from Yersinia pestis bv. Antiqua (strain Antiqua).